An 866-amino-acid chain; its full sequence is Protein aubergine (866 aa).

Methionine 1 is subject to N-acetylmethionine. Positions 1-61 are disordered; that stretch reads MNLPPNPVIA…GGGDAQVGPS (61 aa). Residues arginine 11, arginine 13, arginine 15, and arginine 17 each carry the symmetric dimethylarginine modification. Over residues 46–56 the composition is skewed to gly residues; it reads ASGGNGGGGDA. Positions 281–390 constitute a PAZ domain; the sequence is TLYNILSDAI…IIPELARATG (110 aa). The 298-residue stretch at 555 to 852 folds into the Piwi domain; the sequence is IVMVVMRSPN…LAFLVAESIN (298 aa).

Belongs to the argonaute family. Piwi subfamily. Component of the ping-pong piRNA processing (4P) complex consisting of krimp, aub and AGO3. Interacts (via N-terminus when symmetrically dimethylated on arginine residues) with krimp (via tudor domain); this interaction requires methylation of at least one N-terminal arginie residue. Interacts with vas and AGO3. May form part of a piRNA processing complex consisting of tud, aub and AGO3. Interacts (when symmetrically dimethylated on arginine residues) with tud; methylation and/or interaction requires association with piRNA. Interacts (via N-terminus and when associated with piRNA) with csul/PRMT5; the interaction recruits the PRMT5 methylosome complex to modify N-terminal arginines by symmetrical dimethylation but involves residues other than the arginines to be modified. Forms a complex with smg, twin, AGO3, nanos mRNA and piRNAs that targets the nanos 3'-untranslated region, in early embryos. Interacts with nanos mRNA and rump (in an RNA-dependent manner). Interacts with papi and vret. Interacts with me31B. Post-translationally, symmetrical dimethylation of arginines (sDMA) on Arg-11, Arg-13 and/or Arg-15 by csul/PRMT5/DART5, is required for binding to tud, localization to the pole plasm and association with the correct piRNAs. SDMA on Arg-11, Arg-13, Arg-15 and/or Arg-17 is required for binding to krimp and stable recruitment to subregions of the nuage. Methylation state does not affect protein stability. SDMA plays an important role in ping-pong amplification of piRNAs and is essential for function in vivo. Methylation state functions as an indicator of its piRNA binding state. PiRNA binding promotes sDMA modification; piRNA binding induces a conformational change that exposes the N-terminal arginines, making them available to the methylosome complex. In terms of tissue distribution, expressed in ovary. In the germarium, found in germline stem and cyst cells. In egg chambers from stage 6, expressed both in nurse cells and oocytes. In embryos, accumulates in the pole cells, although low expression is detected throughout the entire embryo. In testis, expressed in germline stem cells, gonialblast and spermatogonia cells (at protein level). In the adult brain, expressed in the ellipsoid body, the mushroom body subdivision in the peduncle and the cell body layer. Expressed specifically in alpha'/beta' and gamma neurons.

Its subcellular location is the cytoplasm. It localises to the cytosol. It is found in the perinuclear region. The protein resides in the cytoplasmic ribonucleoprotein granule. Its function is as follows. Component of the perinuclear meiotic nuage, a germline-specific subcellular membraneless ribonucleoprotein compartment involved in production of transposable element-repressing Piwi-interacting RNA (piRNA)-induced silencing complexes (piRISCs), which are essential for maintaining germline integrity during oogenesis; essential for the formation and/or structural integrity of nuage particles. Acts via the Piwi-interacting RNA (piRNA) metabolic process, which mediates the repression of transposable elements during meiosis by forming complexes composed of piRNAs and Piwi proteins and governs the methylation and subsequent repression of transposons. Directly binds piRNAs, a class of 24 to 30 nucleotide RNAs that are generated by a Dicer-independent mechanism and are primarily derived from transposons and other repeated sequence elements. Shows RNA cleavage or slicer activity; including aub-piRNA complexes from ovary and testis. When loaded with guide piRNAs recognizes and cleaves complementary RNAs to repress their expression and produce complementary piRNAs. Together with Piwi protein AGO3 recruited to subregions of the perinuclear nuage by krimp, which coordinates their activity in the ping-pong amplification step of secondary piRNA biogenesis. Krimp recruits piRNA bound aub and unbound AGO3, bringing them into close proximity to facilitate the loading onto AGO3 of freshly cut piRNAs generated by aub cleavage of target sequences; krimp recognizes the piRNA loading state of the Piwi proteins via symmetrically dimethylated arginine modification in their N-terminus. Important for asymmetric ping-pong amplification to bias production towards antisense piRNAs capable of silencing transposable elements. Required for the localization of mael and krimp to the meiotic nuage. In ovary, associates predominantly with antisense piRNAs that contain uridine at their 5' end. In testis, associates with Su(Ste) antisense piRNAs (most abundant class of piRNAs found in complex with aub in testes) and negatively regulates Ste expression, most likely by cleaving its transcripts. Also in testis, may repress translation of vas when associated with a piRNA derived from chromosome X, termed AT-chX-1, whose sequence shows strong complementarity to vas mRNA. Involved in repression of long interspersed nuclear elements (LINEs) including HeT-A, I-element and TART LINEs. Repression of specialized telomeric retroelements HeT-A and TART is involved in telomere regulation; Drosophila telomeres being maintained by transposition of specialized telomeric retroelements. Also involved in telomeric trans-silencing, a repression mechanism by which a transposon or a transgene inserted in subtelomeric heterochromatin has the capacity to repress in trans, in the female germline, a homologous transposon, or transgene located in euchromatin. Involved in the suppression of meiotic drive of sex chromosomes and autosomes. Involved in transposon silencing in the adult brain. Required for dorsal-ventral as well as anterior-posterior patterning of the egg. Required during oogenesis for primordial germ cell formation and activation of RNA interference. During early oogenesis, required for osk mRNA silencing and polarization of the microtubule cytoskeleton. During mid-oogenesis, required for osk mRNA localization to the posterior pole and efficient translation of osk and grk. During embryogenesis, required for posterior localization of nanos (nos) mRNA, independently of osk, and pole cell formation. Forms a complex with smg, twin, AGO3 and specific piRNAs that targets nanos mRNA (and probably other maternal mRNAS) for deadenylation promoting its decay during early embryogenesis. This chain is Protein aubergine, found in Drosophila melanogaster (Fruit fly).